A 343-amino-acid chain; its full sequence is MTNFYKVFLAVFILVCCNISHAAVSFIGSTENDVGPSQGSYSSTHAMDNLPFVYNTGYNIGYQNANVWRISGGFCVGLDGKVDLPVVGSLDGQSIYGLTEEVGLLIWMGDTNYSRGTAMSGNSWENVFSGWCVGNYVSTQGLSVHVRPVILKRNSSAQYSVQKTSIGSIRMRPYNGSSAGSVQTTVNFSLNPFTLNDTVTSCRLLTPSAVNVSLAAISAGQLPSSGDEVVAGTTSLKLQCDAGVTVWATLTDATTPSNRSDILTLTGASTATGVGLRIYKNTDSTPLKFGPDSPVKGNENQWQLSTGTETSPSVRLYVKYVNTGEGINPGTVNGISTFTFSYQ.

The first 22 residues, Met-1–Ala-22, serve as a signal peptide directing secretion. The receptor-binding lectin domain stretch occupies residues Ala-23–Val-199. Residues Ala-65–Asn-66, Asp-110–Thr-111, and Ser-138–Gly-141 each bind a carbohydrate. A disulfide bridge connects residues Cys-75 and Cys-132. The interval Thr-200–Gln-343 is fimbrillin-binding domain. A disordered region spans residues Leu-287–Gly-307. The segment covering Asn-298–Gly-307 has biased composition (polar residues).

This sequence belongs to the fimbrial protein family.

The protein resides in the fimbrium. Functionally, essential fimbrial adhesion factor that mediates binding to N-acetylglucosamine-containing receptors in the host intestinal microvilli, leading to colonization of the intestinal tissue, and diarrhea or septicemia. Also confers adhesiveness to laminin and basement membranes. The sequence is that of F17c-G fimbrial adhesin (f17cG) from Escherichia coli.